The chain runs to 235 residues: Small ribosomal subunit protein uS2c (235 aa).

The protein belongs to the universal ribosomal protein uS2 family.

It is found in the plastid. The protein resides in the chloroplast. This Adiantum capillus-veneris (Maidenhair fern) protein is Small ribosomal subunit protein uS2c (rps2).